Consider the following 218-residue polypeptide: Protein-L-isoaspartate O-methyltransferase (218 aa).

Residue Ser63 is part of the active site.

It belongs to the methyltransferase superfamily. L-isoaspartyl/D-aspartyl protein methyltransferase family.

The protein resides in the cytoplasm. The catalysed reaction is [protein]-L-isoaspartate + S-adenosyl-L-methionine = [protein]-L-isoaspartate alpha-methyl ester + S-adenosyl-L-homocysteine. In terms of biological role, catalyzes the methyl esterification of L-isoaspartyl residues in peptides and proteins that result from spontaneous decomposition of normal L-aspartyl and L-asparaginyl residues. It plays a role in the repair and/or degradation of damaged proteins. In Syntrophus aciditrophicus (strain SB), this protein is Protein-L-isoaspartate O-methyltransferase.